The chain runs to 971 residues: Isoleucine--tRNA ligase (971 aa).

Residues Pro64 to His74 carry the 'HIGH' region motif. Glu602 contributes to the L-isoleucyl-5'-AMP binding site. The short motif at Lys643–Ser647 is the 'KMSKS' region element. Lys646 is an ATP binding site.

This sequence belongs to the class-I aminoacyl-tRNA synthetase family. IleS type 1 subfamily. Monomer.

It is found in the cytoplasm. The catalysed reaction is tRNA(Ile) + L-isoleucine + ATP = L-isoleucyl-tRNA(Ile) + AMP + diphosphate. Catalyzes the attachment of isoleucine to tRNA(Ile). As IleRS can inadvertently accommodate and process structurally similar amino acids such as valine, to avoid such errors it has two additional distinct tRNA(Ile)-dependent editing activities. One activity is designated as 'pretransfer' editing and involves the hydrolysis of activated Val-AMP. The other activity is designated 'posttransfer' editing and involves deacylation of mischarged Val-tRNA(Ile). The protein is Isoleucine--tRNA ligase of Bartonella quintana (strain Toulouse) (Rochalimaea quintana).